A 303-amino-acid chain; its full sequence is Methionyl-tRNA formyltransferase (303 aa).

(6S)-5,6,7,8-tetrahydrofolate is bound at residue 110–113; sequence SLLP.

The protein belongs to the Fmt family.

It carries out the reaction L-methionyl-tRNA(fMet) + (6R)-10-formyltetrahydrofolate = N-formyl-L-methionyl-tRNA(fMet) + (6S)-5,6,7,8-tetrahydrofolate + H(+). Its function is as follows. Attaches a formyl group to the free amino group of methionyl-tRNA(fMet). The formyl group appears to play a dual role in the initiator identity of N-formylmethionyl-tRNA by promoting its recognition by IF2 and preventing the misappropriation of this tRNA by the elongation apparatus. This chain is Methionyl-tRNA formyltransferase, found in Ehrlichia ruminantium (strain Gardel).